The following is a 399-amino-acid chain: S-adenosylmethionine synthase (399 aa).

Residue H17 participates in ATP binding. D19 lines the Mg(2+) pocket. E45 contacts K(+). L-methionine is bound by residues E58 and Q101. The tract at residues 101–111 (QSADIAMGVDQ) is flexible loop. Residues 177–179 (DGK), 244–245 (RF), D253, 259–260 (RK), A276, and K280 contribute to the ATP site. D253 lines the L-methionine pocket. K284 lines the L-methionine pocket.

This sequence belongs to the AdoMet synthase family. In terms of assembly, homotetramer; dimer of dimers. Mg(2+) serves as cofactor. Requires K(+) as cofactor.

It is found in the cytoplasm. The catalysed reaction is L-methionine + ATP + H2O = S-adenosyl-L-methionine + phosphate + diphosphate. The protein operates within amino-acid biosynthesis; S-adenosyl-L-methionine biosynthesis; S-adenosyl-L-methionine from L-methionine: step 1/1. Its function is as follows. Catalyzes the formation of S-adenosylmethionine (AdoMet) from methionine and ATP. The overall synthetic reaction is composed of two sequential steps, AdoMet formation and the subsequent tripolyphosphate hydrolysis which occurs prior to release of AdoMet from the enzyme. In Bacillus thuringiensis subsp. konkukian (strain 97-27), this protein is S-adenosylmethionine synthase.